Here is a 937-residue protein sequence, read N- to C-terminus: Inactive tyrosine-protein kinase transmembrane receptor ROR1 (937 aa).

An N-terminal signal peptide occupies residues 1-29; it reads MHRPRRRGTRPPLLALLAALLLAARGAAA. The Extracellular segment spans residues 30–406; sequence QETELSVSAE…KEKNKMEILY (377 aa). Positions 42–147 constitute an Ig-like C2-type domain; sequence PTSSWNISSE…EVVSSTGVLF (106 aa). Residues asparagine 47 and asparagine 66 are each glycosylated (N-linked (GlcNAc...) asparagine). Intrachain disulfides connect cysteine 79–cysteine 131, cysteine 170–cysteine 235, cysteine 178–cysteine 228, cysteine 219–cysteine 260, cysteine 248–cysteine 296, cysteine 252–cysteine 282, cysteine 313–cysteine 391, cysteine 334–cysteine 374, and cysteine 362–cysteine 386. Positions 165-299 constitute an FZ domain; that stretch reads EEDGFCQPYR…SPEAANCIRI (135 aa). An N-linked (GlcNAc...) asparagine glycan is attached at asparagine 184. Positions 312-391 constitute a Kringle domain; that stretch reads KCYNSTGVDY…KSDLCDIPAC (80 aa). An N-linked (GlcNAc...) asparagine glycan is attached at asparagine 315. A helical membrane pass occupies residues 407–427; the sequence is ILVPSVAIPLAIALLFFFICV. Over 428–937 the chain is Cytoplasmic; sequence CRNNQKSSSA…HTESMISAEL (510 aa). Positions 473-746 constitute a Protein kinase domain; that stretch reads VRFMEELGEC…PRFKDIHVRL (274 aa). Residues 479-487 and lysine 506 contribute to the ATP site; that span reads LGECAFGKI. Position 645 is a phosphotyrosine; by autocatalysis (tyrosine 645). Over residues 753-762 the composition is skewed to low complexity; it reads SSHTSSTTPS. Disordered stretches follow at residues 753–779 and 833–890; these read SSHT…SPVS and AAHY…HMSI. Over residues 763 to 779 the composition is skewed to polar residues; that stretch reads GGNATTQTTSLSASPVS. Residues 854–864 show a composition bias toward low complexity; the sequence is RSPSSASGSTS. Residues 865–880 show a composition bias toward polar residues; it reads TGHVTSLPSSGSNQEA.

This sequence belongs to the protein kinase superfamily. Tyr protein kinase family. ROR subfamily. As to quaternary structure, interacts with ERBB2 and IGFBP5. As to expression, expressed strongly in human heart, lung and kidney, but weakly in the CNS. Isoform Short is strongly expressed in fetal and adult CNS and in a variety of human cancers, including those originating from CNS or PNS neuroectoderm.

It localises to the membrane. It is found in the cell projection. The protein resides in the axon. In terms of biological role, has very low kinase activity in vitro and is unlikely to function as a tyrosine kinase in vivo. Receptor for ligand WNT5A which activate downstream NFkB signaling pathway and may result in the inhibition of WNT3A-mediated signaling. In inner ear, crucial for spiral ganglion neurons to innervate auditory hair cells. Via IGFBP5 ligand, forms a complex with ERBB2 to enhance CREB oncogenic signaling. This chain is Inactive tyrosine-protein kinase transmembrane receptor ROR1 (ROR1), found in Homo sapiens (Human).